The primary structure comprises 389 residues: Zinc finger C2HC domain-containing protein 1C homolog (389 aa).

Disordered regions lie at residues 16 to 44 (MLPHNTTEAPGPHSAKQDSYEQGDSSQQS) and 84 to 115 (SYPHCTGISQQDPESDSQGQGKGLFYSSGPQS). Composition is skewed to polar residues over residues 35–44 (YEQGDSSQQS) and 90–102 (GISQQDPESDSQG). Residues 211-266 (VQIRRLEAAGESLEEEIRRKQILLRGKLKKTEEELRRIQMQKEQAKENENRELQKI) adopt a coiled-coil conformation. 2 disordered regions span residues 301 to 320 (REDETWGRSQQNSSPFQLSD) and 343 to 389 (SELS…PQLG). Residues 307–317 (GRSQQNSSPFQ) show a composition bias toward polar residues. Residues 368–382 (SSLSMAPDSSGSSGS) show a composition bias toward low complexity.

This sequence belongs to the ZC2HC1 family.

In Pongo abelii (Sumatran orangutan), this protein is Zinc finger C2HC domain-containing protein 1C homolog (ZC2HC1C).